A 133-amino-acid chain; its full sequence is Sec-independent protein translocase protein TatB (133 aa).

A helical transmembrane segment spans residues 1-21 (MFDIGFWELVLIAIVALVVLG). The tract at residues 67 to 133 (EQMGMQNLSP…ASQPAEKKAE (67 aa)) is disordered. The span at 70 to 84 (GMQNLSPELQKSVES) shows a compositional bias: polar residues. Residues 97–116 (AATPSSEASSTSSNPSSATE) show a composition bias toward low complexity.

The protein belongs to the TatB family. In terms of assembly, the Tat system comprises two distinct complexes: a TatABC complex, containing multiple copies of TatA, TatB and TatC subunits, and a separate TatA complex, containing only TatA subunits. Substrates initially bind to the TatABC complex, which probably triggers association of the separate TatA complex to form the active translocon.

Its subcellular location is the cell inner membrane. Functionally, part of the twin-arginine translocation (Tat) system that transports large folded proteins containing a characteristic twin-arginine motif in their signal peptide across membranes. Together with TatC, TatB is part of a receptor directly interacting with Tat signal peptides. TatB may form an oligomeric binding site that transiently accommodates folded Tat precursor proteins before their translocation. This Vibrio cholerae serotype O1 (strain ATCC 39315 / El Tor Inaba N16961) protein is Sec-independent protein translocase protein TatB.